The following is a 527-amino-acid chain: Zinc finger CCCH-type with G patch domain-containing protein (527 aa).

A disordered region spans residues 97-126 (GEVSGSSSDMREREDEREEEDDGEVEGEVD). Positions 111-125 (DEREEEDDGEVEGEV) are enriched in acidic residues. The C3H1-type zinc finger occupies 173–200 (QKSMKPCPFFLEDKCRFADNCRFSHGEV). The interval 268–312 (LREDDLPSCSDSEDDDNGEGEAAFPRVLTQEEDWAPSRSSSAFGG) is disordered. Positions 317–363 (TRGIGSKLMLKMGYEYGKGLGKTSEGRVEPVLAVVLPKGKSLDQCAE) constitute a G-patch domain. Disordered regions lie at residues 369–396 (TQRKVAKGKDGQQVSRNKRTRKARAHNT), 410–444 (LGNGDANPEAGGTCGPPPSHTPSSQGAGVEAYKGG), and 505–527 (KAQELSAQRENRKADTHKKMTEF). Positions 384–393 (RNKRTRKARA) are enriched in basic residues. The span at 511-527 (AQRENRKADTHKKMTEF) shows a compositional bias: basic and acidic residues.

It is found in the nucleus. In terms of biological role, transcription repressor that specifically binds the 5'-GGAG[GA]A[GA]A-3' consensus sequence. Represses transcription by recruiting the chromatin multiprotein complex NuRD to target promoters. Negatively regulates expression of EGFR, a gene involved in cell proliferation, survival and migration. The protein is Zinc finger CCCH-type with G patch domain-containing protein (zgpat) of Salmo salar (Atlantic salmon).